We begin with the raw amino-acid sequence, 70 residues long: uncharacterized protein (70 aa).

To M.pneumoniae MPN377.

This is an uncharacterized protein from Ureaplasma parvum serovar 3 (strain ATCC 700970).